The chain runs to 172 residues: Large ribosomal subunit protein uL10 (172 aa).

Belongs to the universal ribosomal protein uL10 family. Part of the ribosomal stalk of the 50S ribosomal subunit. The N-terminus interacts with L11 and the large rRNA to form the base of the stalk. The C-terminus forms an elongated spine to which L12 dimers bind in a sequential fashion forming a multimeric L10(L12)X complex.

Its function is as follows. Forms part of the ribosomal stalk, playing a central role in the interaction of the ribosome with GTP-bound translation factors. The polypeptide is Large ribosomal subunit protein uL10 (Methylobacterium radiotolerans (strain ATCC 27329 / DSM 1819 / JCM 2831 / NBRC 15690 / NCIMB 10815 / 0-1)).